The chain runs to 102 residues: Flagellar hook-basal body complex protein FliE 1 (102 aa).

It belongs to the FliE family.

The protein resides in the bacterial flagellum basal body. The chain is Flagellar hook-basal body complex protein FliE 1 (fliE1) from Bradyrhizobium diazoefficiens (strain JCM 10833 / BCRC 13528 / IAM 13628 / NBRC 14792 / USDA 110).